Reading from the N-terminus, the 326-residue chain is Malate dehydrogenase (326 aa).

11 to 17 (GAAGQIG) is a binding site for NAD(+). 2 residues coordinate substrate: arginine 92 and arginine 98. NAD(+)-binding positions include asparagine 105, glutamine 112, and 129 to 131 (VGN). Substrate-binding residues include asparagine 131 and arginine 162. The active-site Proton acceptor is the histidine 187.

Belongs to the LDH/MDH superfamily. MDH type 2 family.

The enzyme catalyses (S)-malate + NAD(+) = oxaloacetate + NADH + H(+). In terms of biological role, catalyzes the reversible oxidation of malate to oxaloacetate. This Alkalilimnicola ehrlichii (strain ATCC BAA-1101 / DSM 17681 / MLHE-1) protein is Malate dehydrogenase.